A 186-amino-acid polypeptide reads, in one-letter code: dITP/XTP pyrophosphatase (186 aa).

7–12 is a substrate binding site; that stretch reads TSNPGK. Mg(2+)-binding residues include Glu-36 and Asp-65. Asp-65 functions as the Proton acceptor in the catalytic mechanism. Residues Ser-66, 140–143, Lys-163, and 168–169 each bind substrate; these read FGYD and HR.

The protein belongs to the HAM1 NTPase family. Homodimer. Mg(2+) is required as a cofactor. It depends on Mn(2+) as a cofactor.

The catalysed reaction is XTP + H2O = XMP + diphosphate + H(+). The enzyme catalyses dITP + H2O = dIMP + diphosphate + H(+). It carries out the reaction ITP + H2O = IMP + diphosphate + H(+). Functionally, pyrophosphatase that catalyzes the hydrolysis of nucleoside triphosphates to their monophosphate derivatives, with a high preference for the non-canonical purine nucleotides XTP (xanthosine triphosphate), dITP (deoxyinosine triphosphate) and ITP. Seems to function as a house-cleaning enzyme that removes non-canonical purine nucleotides from the nucleotide pool, thus preventing their incorporation into DNA/RNA and avoiding chromosomal lesions. The polypeptide is dITP/XTP pyrophosphatase (Pyrococcus horikoshii (strain ATCC 700860 / DSM 12428 / JCM 9974 / NBRC 100139 / OT-3)).